Here is a 322-residue protein sequence, read N- to C-terminus: Sideroflexin-1 (322 aa).

Residue Ser2 is modified to N-acetylserine. Over 2 to 102 the chain is Mitochondrial matrix; that stretch reads SGELPPNINI…MSAQVPMNMT (101 aa). The helical transmembrane segment at 103 to 120 threads the bilayer; that stretch reads ITGCMMTFYRTTPAVLFW. Topologically, residues 121–146 are mitochondrial intermembrane; the sequence is QWINQSFNAVVNYTNRSGDAPLTVNE. A helical transmembrane segment spans residues 147-167; sequence LGTAYVSATTGAVATALGLNA. Residues 168–174 are Mitochondrial matrix-facing; it reads LTKHVSP. A helical transmembrane segment spans residues 175–195; sequence LIGRFVPFAAVAAANCINIPL. Residues 196 to 228 are Mitochondrial intermembrane-facing; sequence MRQRELKVGIPVTDENGNRLGESANAAKQAITQ. Residues 229 to 249 traverse the membrane as a helical segment; that stretch reads VVVSRILMAAPGMAIPPFIMN. At 250-266 the chain is on the mitochondrial matrix side; that stretch reads TLEKKAFLKRFPWMSAP. Residues 267–287 form a helical membrane-spanning segment; it reads IQVGLVGFCLVFATPLCCALF. Residues 288 to 322 lie on the Mitochondrial intermembrane side of the membrane; the sequence is PQKSSMSVTSLEAELQAKIQESHPELRRVYFNKGL.

The protein belongs to the sideroflexin family. Highly expressed in tissues with high one-carbon metabolism activity, such as blood, liver and kidney.

The protein localises to the mitochondrion inner membrane. It carries out the reaction L-serine(in) = L-serine(out). The catalysed reaction is L-alanine(in) = L-alanine(out). It catalyses the reaction L-cysteine(in) = L-cysteine(out). In terms of biological role, amino acid transporter importing serine, an essential substrate of the mitochondrial branch of the one-carbon pathway, into mitochondria. Mitochondrial serine is then converted to glycine and formate, which exits to the cytosol where it is used to generate the charged folates that serve as one-carbon donors. May also transport other amino acids including alanine and cysteine. In Homo sapiens (Human), this protein is Sideroflexin-1.